A 63-amino-acid chain; its full sequence is Overexpressed in colon carcinoma 1 protein homolog (63 aa).

Low complexity predominate over residues 1 to 12; it reads MGCGNSTAASAG. Positions 1 to 40 are disordered; it reads MGCGNSTAASAGAGQGPAGAAKDVTEESITEDDKRRNYGG.

This sequence belongs to the OCC1 family.

The polypeptide is Overexpressed in colon carcinoma 1 protein homolog (Bos taurus (Bovine)).